A 334-amino-acid chain; its full sequence is DGAT1/2-independent enzyme synthesizing storage lipids (334 aa).

The Lumenal segment spans residues 1-50; the sequence is MTNKNQSFGVGQDSMSSMTCLIHVLEAWFGVEHLEDYWNFANYLLWVFTP. The N-linked (GlcNAc...) asparagine glycan is linked to asparagine 5. The chain crosses the membrane as a helical span at residues 51–71; the sequence is LLLLILPYFTIFLLYLTIIFL. The Cytoplasmic portion of the chain corresponds to 72-125; it reads HIYKRKNVLKEAYSHNLWDGARKTVATLWDGHAAVWHGYEVHGMEKIPEEGPAL. Residues 126–146 form a helical membrane-spanning segment; the sequence is IIFYHGAIPIDFYYFMAKIFI. Residue histidine 130 is part of the active site. The Lumenal segment spans residues 147–334; that stretch reads HKGRTCRVVA…NKQKINQKTL (188 aa).

This sequence belongs to the diacylglycerol acyltransferase family. Highly divergent.

It is found in the endoplasmic reticulum membrane. It carries out the reaction a 1,2-diacylglycerol + a 1,2-diacyl-sn-glycero-3-phosphocholine = a triacylglycerol + a 1-acyl-sn-glycero-3-phosphocholine. The catalysed reaction is a 1-O-alkyl-2-acyl-sn-glycero-3-phosphocholine + a 1,2-diacylglycerol = a 1-O-alkyl-sn-glycero-3-phosphocholine + a triacylglycerol. It catalyses the reaction a 2-acylglycerol + an acyl-CoA = a 1,2-diacylglycerol + CoA. The enzyme catalyses an acyl-CoA + a 1,2-diacyl-sn-glycerol = a triacyl-sn-glycerol + CoA. It carries out the reaction 2-(9Z-octadecenoyl)-glycerol + (9Z)-octadecenoyl-CoA = 1,2-di-(9Z-octadecenoyl)-glycerol + CoA. The catalysed reaction is 1,2-di-(9Z-octadecenoyl)-sn-glycerol + (9Z)-octadecenoyl-CoA = 1,2,3-tri-(9Z-octadecenoyl)-glycerol + CoA. Its activity is regulated as follows. Acyltransferase activity is specifically inhibited by TMX1 at the endoplasmic reticulum, restricting accumulation of triacylglycerol. Catalytic subunit of the alternative triglyceride biosynthesis pathway, which mediates formation of triacylglycerol from diacylglycerol and membrane phospholipids. Synthesizes triacylglycerol at the expense of membrane phospholipids, such as phosphatidylcholine (PC) and its ether-linked form (ePC), thereby altering the composition of membranes. The alternative triglyceride biosynthesis pathway is probably required to provide the energy required for rapid growth when fuel sources are limiting. It maintains mitochondrial function during periods of extracellular lipid starvation. Can also use acyl-CoA as donor: acts as a acyl-CoA:monoacylglycerol acyltransferase (MGAT), but also shows acyl-CoA:diacylglycerol acyltransferase (DGAT) activity. The chain is DGAT1/2-independent enzyme synthesizing storage lipids (TMEM68) from Bos taurus (Bovine).